Consider the following 232-residue polypeptide: Sugar fermentation stimulation protein homolog (232 aa).

Belongs to the SfsA family.

This Pelagibacter ubique (strain HTCC1062) protein is Sugar fermentation stimulation protein homolog.